The following is a 415-amino-acid chain: Beta-1,4-glucuronyltransferase 1 (415 aa).

Topologically, residues 1 to 8 (MQMSYAIR) are cytoplasmic. A helical; Signal-anchor for type II membrane protein transmembrane segment spans residues 9–36 (CAFYQLLLAALMLVAMLQLLYLSLLSGL). The Lumenal segment spans residues 37 to 415 (HGQEEQDQYF…AKYPNSPRRC (379 aa)). Asparagine 204 carries N-linked (GlcNAc...) asparagine glycosylation. The Mn(2+) site is built by aspartate 227 and aspartate 229. A glycan (N-linked (GlcNAc...) asparagine) is linked at asparagine 300.

It belongs to the glycosyltransferase 49 family. Interacts with LARGE1 and LARGE2. It depends on Mn(2+) as a cofactor. In terms of tissue distribution, in the adult, highly expressed in heart, brain, skeletal muscle and kidney and to a lesser extent in placenta, pancreas, spleen, prostate, testis, ovary, small intestine and colon. Very weak expression in lung, liver, thymus and peripheral blood leukocytes. In fetal highly expressed in brain and kidney and to a lesser extent in lung and liver.

Its subcellular location is the golgi apparatus membrane. It catalyses the reaction 3-O-[beta-D-Xyl-(1-&gt;4)-Rib-ol-P-Rib-ol-P-3-beta-D-GalNAc-(1-&gt;3)-beta-D-GlcNAc-(1-&gt;4)-(O-6-P-alpha-D-Man)]-Thr-[protein] + UDP-alpha-D-glucuronate = 3-O-[beta-D-GlcA-(1-&gt;3)-beta-D-Xyl-(1-&gt;4)-Rib-ol-P-Rib-ol-P-3-beta-D-GalNAc-(1-&gt;3)-beta-D-GlcNAc-(1-&gt;4)-(O-6-P-alpha-D-Man)]-Thr-[protein] + UDP + H(+). It functions in the pathway protein modification; protein glycosylation. Functionally, beta-1,4-glucuronyltransferase involved in O-mannosylation of alpha-dystroglycan (DAG1). Transfers a glucuronic acid (GlcA) residue onto a xylose (Xyl) acceptor to produce the glucuronyl-beta-1,4-xylose-beta disaccharide primer, which is further elongated by LARGE1, during synthesis of phosphorylated O-mannosyl glycan. Phosphorylated O-mannosyl glycan is a carbohydrate structure present in alpha-dystroglycan (DAG1), which is required for binding laminin G-like domain-containing extracellular proteins with high affinity. Required for axon guidance; via its function in O-mannosylation of alpha-dystroglycan (DAG1). In Homo sapiens (Human), this protein is Beta-1,4-glucuronyltransferase 1.